Consider the following 556-residue polypeptide: MAVEVVQETLQQAASSSSTTVLGFSPMLTTLVGTLVAMALYEYWRRNSREYRMVANIPSPPELPILGQAHVAAGLSNAEILAVGLGYLNKYGETMKAWLGNVLLVFLTNPSDIELILSGHQHLTKAEEYRYFKPWFGDGLLISNGHHWRHHRKMIAPTFHQSILKSFVPTFVDHSKAVVARMGLEAGKSFDVHDYMSQTTVDILLSTAMGVKKLPEGNKSFEYAQAVVDMCDIIHKRQVKLLYRLDSIYKFTKLREKGDRMMNIILGMTSKVVKDRKENFQEESRAIVEEISTPVASTPASKKEGLRDDLDDIDENDVGAKRRLALLDAMVEMAKNPDIEWNEKDIMDEVNTIMFEGHDTTSAGSSFALCMMGIHKDIQAKVFAEQKAIFGDNMLRDCTFADTMEMKYLERVILETLRLYPPVPLIARRLDYDLKLASGPYTVPKGTTVIVLQYCVHRRPDIYPNPTKFDPDNFLPERMANRHYYSFIPFSAGPRSCVGRKYAMLKLKVLLSTIVRNYIVHSTDTEADFKLQADIILKLENGFNVSLEKRQYATVA.

Heme-binding residues include Glu-356 and Cys-497.

Belongs to the cytochrome P450 family. Heme is required as a cofactor.

The protein localises to the endoplasmic reticulum membrane. It is found in the microsome membrane. Its function is as follows. May be involved in the metabolism of insect hormones and in the breakdown of synthetic insecticides. The polypeptide is Cytochrome P450 4g1 (Cyp4g1) (Drosophila melanogaster (Fruit fly)).